The chain runs to 314 residues: MKQHPKISLIGSGNIGGTLAHLISLRELGNIVLFDVTEGVPQGKALDLMQAVTIAGSDIKIKGTNDYKDIKGSDAIIITAGLPRKPGMSRDDLISINTGIMKTVAANVKKYAPDAFVIVITNPLDVMVYVMLKESGLPHNKVIGMAGVLDSSRFNLFLAEEFKVSVSNVNSMVLGGHGDAMVPLARYSTISGVPIPDLIKMGLSSNENIEKIIDRTRNGGGEIVALLKTGSAYYAPAASAIEMLESYLKDKRQILTCAAYLQGEYGVHDLYVGVPIMIGKEGVLKVIELQLTTEEKALFDKSVEGVKKLIETIK.

Residues 11–16 (GSGNIG) and aspartate 35 each bind NAD(+). Positions 84 and 90 each coordinate substrate. NAD(+) contacts are provided by residues asparagine 97 and 120-122 (ITN). Substrate is bound by residues asparagine 122 and arginine 153. The Proton acceptor role is filled by histidine 177.

This sequence belongs to the LDH/MDH superfamily. MDH type 3 family.

The catalysed reaction is (S)-malate + NAD(+) = oxaloacetate + NADH + H(+). In terms of biological role, catalyzes the reversible oxidation of malate to oxaloacetate. This is Malate dehydrogenase from Rickettsia rickettsii (strain Iowa).